Here is a 193-residue protein sequence, read N- to C-terminus: Crossover junction endodeoxyribonuclease RuvC (193 aa).

Residues aspartate 7, glutamate 68, and aspartate 141 contribute to the active site. Aspartate 7, glutamate 68, and aspartate 141 together coordinate Mg(2+).

This sequence belongs to the RuvC family. In terms of assembly, homodimer which binds Holliday junction (HJ) DNA. The HJ becomes 2-fold symmetrical on binding to RuvC with unstacked arms; it has a different conformation from HJ DNA in complex with RuvA. In the full resolvosome a probable DNA-RuvA(4)-RuvB(12)-RuvC(2) complex forms which resolves the HJ. It depends on Mg(2+) as a cofactor.

Its subcellular location is the cytoplasm. It carries out the reaction Endonucleolytic cleavage at a junction such as a reciprocal single-stranded crossover between two homologous DNA duplexes (Holliday junction).. The RuvA-RuvB-RuvC complex processes Holliday junction (HJ) DNA during genetic recombination and DNA repair. Endonuclease that resolves HJ intermediates. Cleaves cruciform DNA by making single-stranded nicks across the HJ at symmetrical positions within the homologous arms, yielding a 5'-phosphate and a 3'-hydroxyl group; requires a central core of homology in the junction. The consensus cleavage sequence is 5'-(A/T)TT(C/G)-3'. Cleavage occurs on the 3'-side of the TT dinucleotide at the point of strand exchange. HJ branch migration catalyzed by RuvA-RuvB allows RuvC to scan DNA until it finds its consensus sequence, where it cleaves and resolves the cruciform DNA. This Renibacterium salmoninarum (strain ATCC 33209 / DSM 20767 / JCM 11484 / NBRC 15589 / NCIMB 2235) protein is Crossover junction endodeoxyribonuclease RuvC.